Here is a 209-residue protein sequence, read N- to C-terminus: MKLRVGQTLGTIPRQCEVLLLLLLLGLVDGVHHILSPSSAERSRAVGPGASVGSNRPSLWALPGRLLFQIIPRGAGPRCSPHRLPSKPQFWYVFGGGTQLTILGQPKSDPLVTLFLPSLKNLQANKATLVCLVSEFYPGTLVVDWKVDGVPVTQGVETTQPSKQTNNKYMVSSYLTLISDQWMPHSRYSCRVTHEGNTVEKSVSPAECS.

An N-terminal signal peptide occupies residues 1–30 (MKLRVGQTLGTIPRQCEVLLLLLLLGLVDG). The tract at residues 93 to 104 (VFGGGTQLTILG) is j region. Positions 105 to 209 (QPKSDPLVTL…EKSVSPAECS (105 aa)) are c region. Positions 110–204 (PLVTLFLPSL…EGNTVEKSVS (95 aa)) constitute an Ig-like C1-type domain. Cysteine 131 and cysteine 190 are disulfide-bonded.

In terms of assembly, interacts with VPREB1A. Interacts with SYNV1/HRD1 (via N-terminus); this interaction leads to increased IGLL1 ubiquitination and degradation in pre-B cells, possibly through a lysosomal, not proteasomal, pathway. As to expression, selectively expressed in pre-B lymphocytes.

Its subcellular location is the endoplasmic reticulum. It localises to the secreted. Critical for B-cell development. The protein is Immunoglobulin lambda-like polypeptide 1 (Igll1) of Mus musculus (Mouse).